The following is a 274-amino-acid chain: Kit ligand (274 aa).

The N-terminal stretch at 1–25 is a signal peptide; that stretch reads MKKTQTWIITCIYLQLLLFNPLVKT. At 26–215 the chain is on the extracellular side; sequence KGICENRVTD…SNFTGDSNLQ (190 aa). Disulfide bonds link cysteine 29/cysteine 114 and cysteine 68/cysteine 164. 5 N-linked (GlcNAc...) asparagine glycosylation sites follow: asparagine 90, asparagine 97, asparagine 145, asparagine 196, and asparagine 207. A helical transmembrane segment spans residues 216-238; that stretch reads WAAMALPAFFSLVIGFAFGALYW. Residues 239 to 274 are Cytoplasmic-facing; that stretch reads KKKQPNLTRAVENIQINEEDNEISMLQEKEREFQEV.

This sequence belongs to the SCF family. As to quaternary structure, homodimer, non-covalently linked. Post-translationally, a soluble form is produced by proteolytic processing of the extracellular domain.

The protein localises to the cytoplasm. Its subcellular location is the cytoskeleton. It is found in the cell membrane. The protein resides in the cell projection. It localises to the lamellipodium. The protein localises to the filopodium. Its subcellular location is the secreted. Stimulates the proliferation of mast cells. Able to augment the proliferation of both myeloid and lymphoid hematopoietic progenitors in bone marrow culture. Also mediates cell-cell adhesion. Acts synergistically with other cytokines, probably interleukins. The chain is Kit ligand (KITLG) from Equus caballus (Horse).